Consider the following 174-residue polypeptide: Crossover junction endodeoxyribonuclease RuvC (174 aa).

Active-site residues include aspartate 8, glutamate 68, and aspartate 140. Aspartate 8, glutamate 68, and aspartate 140 together coordinate Mg(2+).

It belongs to the RuvC family. Homodimer which binds Holliday junction (HJ) DNA. The HJ becomes 2-fold symmetrical on binding to RuvC with unstacked arms; it has a different conformation from HJ DNA in complex with RuvA. In the full resolvosome a probable DNA-RuvA(4)-RuvB(12)-RuvC(2) complex forms which resolves the HJ. Mg(2+) serves as cofactor.

The protein localises to the cytoplasm. The catalysed reaction is Endonucleolytic cleavage at a junction such as a reciprocal single-stranded crossover between two homologous DNA duplexes (Holliday junction).. Its function is as follows. The RuvA-RuvB-RuvC complex processes Holliday junction (HJ) DNA during genetic recombination and DNA repair. Endonuclease that resolves HJ intermediates. Cleaves cruciform DNA by making single-stranded nicks across the HJ at symmetrical positions within the homologous arms, yielding a 5'-phosphate and a 3'-hydroxyl group; requires a central core of homology in the junction. The consensus cleavage sequence is 5'-(A/T)TT(C/G)-3'. Cleavage occurs on the 3'-side of the TT dinucleotide at the point of strand exchange. HJ branch migration catalyzed by RuvA-RuvB allows RuvC to scan DNA until it finds its consensus sequence, where it cleaves and resolves the cruciform DNA. The polypeptide is Crossover junction endodeoxyribonuclease RuvC (Legionella pneumophila (strain Corby)).